A 155-amino-acid chain; its full sequence is Ribosomal RNA large subunit methyltransferase H (155 aa).

S-adenosyl-L-methionine is bound by residues Leu72, Gly103, and 122–127 (LSALTL).

The protein belongs to the RNA methyltransferase RlmH family. Homodimer.

The protein localises to the cytoplasm. It catalyses the reaction pseudouridine(1915) in 23S rRNA + S-adenosyl-L-methionine = N(3)-methylpseudouridine(1915) in 23S rRNA + S-adenosyl-L-homocysteine + H(+). In terms of biological role, specifically methylates the pseudouridine at position 1915 (m3Psi1915) in 23S rRNA. The sequence is that of Ribosomal RNA large subunit methyltransferase H from Citrobacter koseri (strain ATCC BAA-895 / CDC 4225-83 / SGSC4696).